We begin with the raw amino-acid sequence, 372 residues long: MNSGIDLEMSFTQGVQNLGLSHELAHLLWIPLPMLLVLVSAVIGVLVTVWLERKISAAAQQRIGPEYAGALGILQPMADGLKLLVKEDIIPARADSVLFTVGPILVLVPVILSWLIVPFGQNLLISNVGIGIFLWIALSSIQPIGLLMSGYSSNNKYSLLGGLRAAAQSISYEIPLALAVLAIVMMSNSLSTVDIVEQQNTAGFLSWNIWRQPVGFIIFWICALAECERLPFDLPEAEEELVAGYQTEYSGMKFALFYLAGYINLVLSALLVSVLYLGGWGFPISIDWFSSFIGLSIDNPLVQIIAASLGIVMTILKAYLLVFLAILLRWTTPRVRIDQLLDLGWKFLLPISLVNLLVTASLKLAFPMTFGG.

Helical transmembrane passes span 27-47 (LLWI…GVLV), 97-117 (VLFT…WLIV), 128-148 (VGIG…GLLM), 166-186 (AAQS…IVMM), 204-224 (FLSW…ICAL), 266-286 (VLSA…PISI), 308-328 (SLGI…AILL), and 347-367 (FLLP…LAFP).

Belongs to the complex I subunit 1 family. NDH-1 is composed of at least 11 different subunits.

The protein resides in the cellular thylakoid membrane. The catalysed reaction is a plastoquinone + NADH + (n+1) H(+)(in) = a plastoquinol + NAD(+) + n H(+)(out). The enzyme catalyses a plastoquinone + NADPH + (n+1) H(+)(in) = a plastoquinol + NADP(+) + n H(+)(out). Its function is as follows. NDH-1 shuttles electrons from an unknown electron donor, via FMN and iron-sulfur (Fe-S) centers, to quinones in the respiratory and/or the photosynthetic chain. The immediate electron acceptor for the enzyme in this species is believed to be plastoquinone. Couples the redox reaction to proton translocation, and thus conserves the redox energy in a proton gradient. The polypeptide is NAD(P)H-quinone oxidoreductase subunit 1 (Prochlorococcus marinus (strain NATL2A)).